A 197-amino-acid chain; its full sequence is Xanthine phosphoribosyltransferase (197 aa).

Residues Leu20 and Asn27 each coordinate xanthine. 128 to 132 serves as a coordination point for 5-phospho-alpha-D-ribose 1-diphosphate; it reads ANGQA. Lys156 contacts xanthine.

The protein belongs to the purine/pyrimidine phosphoribosyltransferase family. Xpt subfamily. Homodimer.

It localises to the cytoplasm. The catalysed reaction is XMP + diphosphate = xanthine + 5-phospho-alpha-D-ribose 1-diphosphate. Its pathway is purine metabolism; XMP biosynthesis via salvage pathway; XMP from xanthine: step 1/1. Functionally, converts the preformed base xanthine, a product of nucleic acid breakdown, to xanthosine 5'-monophosphate (XMP), so it can be reused for RNA or DNA synthesis. In Bacillus cereus (strain ATCC 14579 / DSM 31 / CCUG 7414 / JCM 2152 / NBRC 15305 / NCIMB 9373 / NCTC 2599 / NRRL B-3711), this protein is Xanthine phosphoribosyltransferase.